We begin with the raw amino-acid sequence, 565 residues long: Probable serine/threonine-protein kinase abkA (565 aa).

Positions 44–77 form a coiled coil; it reads NNNNISLKDKFKDLKDLKDNLNEKKINNDNDDDD. The 335-residue stretch at 231–565 folds into the Protein kinase domain; it reads LFQDDPIAAA…FKNIFYKNYK (335 aa). ATP-binding positions include 237 to 245 and lysine 259; that span reads IAAASIGQV. The Proton acceptor role is filled by aspartate 401.

This sequence belongs to the protein kinase superfamily. ADCK protein kinase family.

In Dictyostelium discoideum (Social amoeba), this protein is Probable serine/threonine-protein kinase abkA (abkA).